A 175-amino-acid polypeptide reads, in one-letter code: Bifunctional protein PyrR (175 aa).

Substrate-binding positions include 40 to 41 (TR), 102 to 110 (DDVLYTGRT), R135, and V159. A PRPP-binding motif is present at residues 98–110 (VIIIDDVLYTGRT).

It belongs to the purine/pyrimidine phosphoribosyltransferase family. PyrR subfamily. As to quaternary structure, homodimer and homohexamer; in equilibrium.

It catalyses the reaction UMP + diphosphate = 5-phospho-alpha-D-ribose 1-diphosphate + uracil. Functionally, regulates transcriptional attenuation of the pyrimidine nucleotide (pyr) operon by binding in a uridine-dependent manner to specific sites on pyr mRNA. This disrupts an antiterminator hairpin in the RNA and favors formation of a downstream transcription terminator, leading to a reduced expression of downstream genes. In terms of biological role, also displays a weak uracil phosphoribosyltransferase activity which is not physiologically significant. This is Bifunctional protein PyrR from Staphylococcus haemolyticus (strain JCSC1435).